The primary structure comprises 216 residues: Orotate phosphoribosyltransferase (216 aa).

A 5-phospho-alpha-D-ribose 1-diphosphate-binding site is contributed by Lys-30. Position 38 to 39 (38 to 39 (FF)) interacts with orotate. Residues 75–76 (YK), Arg-102, Lys-103, Lys-106, His-108, and 128–136 (DDVITAGTA) contribute to the 5-phospho-alpha-D-ribose 1-diphosphate site. Orotate is bound by residues Thr-132 and Arg-160.

This sequence belongs to the purine/pyrimidine phosphoribosyltransferase family. PyrE subfamily. In terms of assembly, homodimer. Mg(2+) serves as cofactor.

The enzyme catalyses orotidine 5'-phosphate + diphosphate = orotate + 5-phospho-alpha-D-ribose 1-diphosphate. It functions in the pathway pyrimidine metabolism; UMP biosynthesis via de novo pathway; UMP from orotate: step 1/2. Functionally, catalyzes the transfer of a ribosyl phosphate group from 5-phosphoribose 1-diphosphate to orotate, leading to the formation of orotidine monophosphate (OMP). This is Orotate phosphoribosyltransferase from Acinetobacter baumannii (strain AB307-0294).